A 127-amino-acid chain; its full sequence is Aspartate 1-decarboxylase (127 aa).

Residue Ser-25 is the Schiff-base intermediate with substrate; via pyruvic acid of the active site. The residue at position 25 (Ser-25) is a Pyruvic acid (Ser). Thr-57 is a binding site for substrate. Catalysis depends on Tyr-58, which acts as the Proton donor. 73–75 is a substrate binding site; that stretch reads GAA.

The protein belongs to the PanD family. As to quaternary structure, heterooctamer of four alpha and four beta subunits. Requires pyruvate as cofactor. Post-translationally, is synthesized initially as an inactive proenzyme, which is activated by self-cleavage at a specific serine bond to produce a beta-subunit with a hydroxyl group at its C-terminus and an alpha-subunit with a pyruvoyl group at its N-terminus.

The protein localises to the cytoplasm. It carries out the reaction L-aspartate + H(+) = beta-alanine + CO2. It functions in the pathway cofactor biosynthesis; (R)-pantothenate biosynthesis; beta-alanine from L-aspartate: step 1/1. In terms of biological role, catalyzes the pyruvoyl-dependent decarboxylation of aspartate to produce beta-alanine. This Listeria monocytogenes serotype 4b (strain F2365) protein is Aspartate 1-decarboxylase.